Consider the following 191-residue polypeptide: Large ribosomal subunit protein uL6 (191 aa).

The protein belongs to the universal ribosomal protein uL6 family. In terms of assembly, component of the large ribosomal subunit. Mature ribosomes consist of a small (40S) and a large (60S) subunit. The 40S subunit contains about 32 different proteins and 1 molecule of RNA (18S). The 60S subunit contains 45 different proteins and 3 molecules of RNA (25S, 5.8S and 5S).

The protein resides in the cytoplasm. Functionally, component of the ribosome, a large ribonucleoprotein complex responsible for the synthesis of proteins in the cell. The small ribosomal subunit (SSU) binds messenger RNAs (mRNAs) and translates the encoded message by selecting cognate aminoacyl-transfer RNA (tRNA) molecules. The large subunit (LSU) contains the ribosomal catalytic site termed the peptidyl transferase center (PTC), which catalyzes the formation of peptide bonds, thereby polymerizing the amino acids delivered by tRNAs into a polypeptide chain. The nascent polypeptides leave the ribosome through a tunnel in the LSU and interact with protein factors that function in enzymatic processing, targeting, and the membrane insertion of nascent chains at the exit of the ribosomal tunnel. In Candida albicans (strain SC5314 / ATCC MYA-2876) (Yeast), this protein is Large ribosomal subunit protein uL6.